Reading from the N-terminus, the 397-residue chain is Alanine racemase, biosynthetic (397 aa).

The Proton acceptor; specific for D-alanine role is filled by K42. At K42 the chain carries N6-(pyridoxal phosphate)lysine. Substrate is bound at residue R136. Y257 serves as the catalytic Proton acceptor; specific for L-alanine. M305 contacts substrate. Residues 373 to 397 (ANRPTEAMSNPSRAKSRPMDKQALI) form a disordered region.

This sequence belongs to the alanine racemase family. The cofactor is pyridoxal 5'-phosphate.

It carries out the reaction L-alanine = D-alanine. Its pathway is amino-acid biosynthesis; D-alanine biosynthesis; D-alanine from L-alanine: step 1/1. It functions in the pathway cell wall biogenesis; peptidoglycan biosynthesis. In terms of biological role, catalyzes the interconversion of L-alanine and D-alanine. Provides the D-alanine required for cell wall biosynthesis. The protein is Alanine racemase, biosynthetic (alr) of Mesorhizobium japonicum (strain LMG 29417 / CECT 9101 / MAFF 303099) (Mesorhizobium loti (strain MAFF 303099)).